A 438-amino-acid chain; its full sequence is 5-methylthioadenosine/S-adenosylhomocysteine deaminase (438 aa).

Residues histidine 66 and histidine 68 each coordinate Zn(2+). Positions 95, 148, and 188 each coordinate substrate. A Zn(2+)-binding site is contributed by histidine 215. Positions 218 and 305 each coordinate substrate. Residue aspartate 305 coordinates Zn(2+).

The protein belongs to the metallo-dependent hydrolases superfamily. MTA/SAH deaminase family. Zn(2+) serves as cofactor.

It catalyses the reaction S-adenosyl-L-homocysteine + H2O + H(+) = S-inosyl-L-homocysteine + NH4(+). It carries out the reaction S-methyl-5'-thioadenosine + H2O + H(+) = S-methyl-5'-thioinosine + NH4(+). In terms of biological role, catalyzes the deamination of 5-methylthioadenosine and S-adenosyl-L-homocysteine into 5-methylthioinosine and S-inosyl-L-homocysteine, respectively. Is also able to deaminate adenosine. This is 5-methylthioadenosine/S-adenosylhomocysteine deaminase from Halalkalibacterium halodurans (strain ATCC BAA-125 / DSM 18197 / FERM 7344 / JCM 9153 / C-125) (Bacillus halodurans).